The sequence spans 144 residues: Peroxisomal membrane protein PEX34 (144 aa).

The next 3 membrane-spanning stretches (helical) occupy residues 18 to 30, 52 to 73, and 109 to 131; these read NIWS…LDFF, VWLC…KLCK, and TAAL…RLFK.

As to quaternary structure, homooligomer. Interacts with PEX11, PEX25 and PEX27.

The protein resides in the peroxisome membrane. In concert with the three peroxisome divisional factors, PEX11, PEX25 and PEX27, controls peroxisome morphology and abundance under conditions of peroxisome proliferation. Maintains mature peroxisomes in actively dividing cells. This Saccharomyces cerevisiae (strain ATCC 204508 / S288c) (Baker's yeast) protein is Peroxisomal membrane protein PEX34 (PEX34).